We begin with the raw amino-acid sequence, 1458 residues long: GTPase-activating protein and VPS9 domain-containing protein 1 (1458 aa).

Positions serine 147 to glycine 385 constitute a Ras-GAP domain. Serine 227 bears the Phosphoserine mark. Residues threonine 390 and threonine 458 each carry the phosphothreonine modification. Positions alanine 447–lysine 475 are disordered. A compositionally biased stretch (polar residues) spans lysine 451–asparagine 473. A Phosphotyrosine modification is found at tyrosine 460. Serine 466 carries the phosphoserine modification. A Phosphothreonine modification is found at threonine 470. A phosphoserine mark is found at serine 566 and serine 569. Disordered regions lie at residues glycine 574–glycine 608, leucine 738–serine 821, and histidine 846–asparagine 867. Residues glycine 578–serine 588 are compositionally biased toward polar residues. Phosphoserine occurs at positions 742, 746, and 757. Over residues serine 758–aspartate 777 the composition is skewed to polar residues. Residue threonine 762 is modified to Phosphothreonine. A Phosphoserine modification is found at serine 766. Basic and acidic residues predominate over residues isoleucine 778–cysteine 789. Serine 876, serine 902, serine 903, serine 908, and serine 914 each carry phosphoserine. A compositionally biased stretch (basic and acidic residues) spans lysine 888–serine 902. Disordered regions lie at residues lysine 888–alanine 1022 and lysine 1039–leucine 1072. Over residues alanine 930 to lysine 951 the composition is skewed to low complexity. Basic and acidic residues-rich tracts occupy residues aspartate 952–arginine 973 and glutamate 995–proline 1006. Phosphoserine is present on serine 964. Residues serine 1010 to alanine 1022 show a composition bias toward polar residues. Residues serine 1017 and serine 1044 each carry the phosphoserine modification. The segment covering glutamate 1061 to alanine 1071 has biased composition (basic and acidic residues). Phosphoserine occurs at positions 1076 and 1083. The VPS9 domain occupies isoleucine 1318 to lysine 1458.

It belongs to the GAPVD1 family. Interacts with RAB5A. Interacts with TRIP10/CIP4. Present in adipocytes and fibroblasts (at protein level). Ubiquitously expressed.

Its subcellular location is the membrane. It is found in the endosome. Functionally, acts both as a GTPase-activating protein (GAP) and a guanine nucleotide exchange factor (GEF), and participates in various processes such as endocytosis, insulin receptor internalization or LC2A4/GLUT4 trafficking. Acts as a GEF for the Ras-related protein RAB31 by exchanging bound GDP for free GTP, leading to regulate LC2A4/GLUT4 trafficking. In the absence of insulin, it maintains RAB31 in an active state and promotes a futile cycle between LC2A4/GLUT4 storage vesicles and early endosomes, retaining LC2A4/GLUT4 inside the cells. Upon insulin stimulation, it is translocated to the plasma membrane, releasing LC2A4/GLUT4 from intracellular storage vesicles. Also involved in EGFR trafficking and degradation, possibly by promoting EGFR ubiquitination and subsequent degradation by the proteasome. Has GEF activity for Rab5 and GAP activity for Ras. In Mus musculus (Mouse), this protein is GTPase-activating protein and VPS9 domain-containing protein 1 (Gapvd1).